The sequence spans 600 residues: Probable tripeptidyl-peptidase SED4 (600 aa).

An N-terminal signal peptide occupies residues 1-22 (MVSFTLRAIGACLIGLPALITA). Residues 23 to 202 (APTSHVSNGF…SVFTSDLEMT (180 aa)) constitute a propeptide, removed in mature form. N-linked (GlcNAc...) asparagine glycans are attached at residues Asn210 and Asn281. The Peptidase S53 domain maps to 212–600 (TITPDCIREL…FEKLSKLVLI (389 aa)). Catalysis depends on charge relay system residues Glu288 and Asp292. N-linked (GlcNAc...) asparagine glycans are attached at residues Asn323 and Asn404. The active-site Charge relay system is the Ser504. Ca(2+)-binding residues include Asp546, Ile547, Gly579, and Asp581.

Requires Ca(2+) as cofactor.

It localises to the secreted. The protein resides in the extracellular space. It carries out the reaction Release of an N-terminal tripeptide from a polypeptide.. Secreted tripeptidyl-peptidase which degrades proteins at acidic pHs and is involved in virulence. The polypeptide is Probable tripeptidyl-peptidase SED4 (SED4) (Trichophyton verrucosum (strain HKI 0517)).